Here is a 66-residue protein sequence, read N- to C-terminus: Large ribosomal subunit protein uL29 (66 aa).

It belongs to the universal ribosomal protein uL29 family.

This is Large ribosomal subunit protein uL29 from Rhizobium meliloti (strain 1021) (Ensifer meliloti).